The following is a 214-amino-acid chain: uncharacterized protein (214 aa).

This is an uncharacterized protein from Methanocaldococcus jannaschii (strain ATCC 43067 / DSM 2661 / JAL-1 / JCM 10045 / NBRC 100440) (Methanococcus jannaschii).